Here is a 446-residue protein sequence, read N- to C-terminus: GTPase Der (446 aa).

EngA-type G domains are found at residues 3-168 and 181-354; these read PVIA…YAGQ and IKIA…KAAM. Residues 9–16, 57–61, 120–123, 187–194, 234–238, and 299–302 contribute to the GTP site; these read GRPNVGKS, DTGGF, NKAE, DTAGL, and NKWD. A KH-like domain is found at 355–439; that stretch reads SKLPTPKLTR…PLRIEFRSST (85 aa).

It belongs to the TRAFAC class TrmE-Era-EngA-EngB-Septin-like GTPase superfamily. EngA (Der) GTPase family. In terms of assembly, associates with the 50S ribosomal subunit.

Functionally, GTPase that plays an essential role in the late steps of ribosome biogenesis. This Paraburkholderia phymatum (strain DSM 17167 / CIP 108236 / LMG 21445 / STM815) (Burkholderia phymatum) protein is GTPase Der.